The sequence spans 616 residues: Dihydroxy-acid dehydratase (616 aa).

D81 is a binding site for Mg(2+). C122 contributes to the [2Fe-2S] cluster binding site. Mg(2+) contacts are provided by D123 and K124. K124 carries the N6-carboxylysine modification. Position 195 (C195) interacts with [2Fe-2S] cluster. Mg(2+) is bound at residue E491. S517 acts as the Proton acceptor in catalysis.

The protein belongs to the IlvD/Edd family. In terms of assembly, homodimer. The cofactor is [2Fe-2S] cluster. Requires Mg(2+) as cofactor.

It carries out the reaction (2R)-2,3-dihydroxy-3-methylbutanoate = 3-methyl-2-oxobutanoate + H2O. The enzyme catalyses (2R,3R)-2,3-dihydroxy-3-methylpentanoate = (S)-3-methyl-2-oxopentanoate + H2O. Its pathway is amino-acid biosynthesis; L-isoleucine biosynthesis; L-isoleucine from 2-oxobutanoate: step 3/4. It functions in the pathway amino-acid biosynthesis; L-valine biosynthesis; L-valine from pyruvate: step 3/4. Functionally, functions in the biosynthesis of branched-chain amino acids. Catalyzes the dehydration of (2R,3R)-2,3-dihydroxy-3-methylpentanoate (2,3-dihydroxy-3-methylvalerate) into 2-oxo-3-methylpentanoate (2-oxo-3-methylvalerate) and of (2R)-2,3-dihydroxy-3-methylbutanoate (2,3-dihydroxyisovalerate) into 2-oxo-3-methylbutanoate (2-oxoisovalerate), the penultimate precursor to L-isoleucine and L-valine, respectively. The sequence is that of Dihydroxy-acid dehydratase from Escherichia fergusonii (strain ATCC 35469 / DSM 13698 / CCUG 18766 / IAM 14443 / JCM 21226 / LMG 7866 / NBRC 102419 / NCTC 12128 / CDC 0568-73).